A 305-amino-acid polypeptide reads, in one-letter code: Coiled-coil domain-containing protein 83 (305 aa).

Residues 1 to 25 (MDSSAKGSKKDAPDGPPKDSKLPVS) form a disordered region. Basic and acidic residues predominate over residues 8–21 (SKKDAPDGPPKDSK). A coiled-coil region spans residues 37–186 (ENAVERFMFH…LEDEKKRISR (150 aa)).

This Mus musculus (Mouse) protein is Coiled-coil domain-containing protein 83 (Ccdc83).